Reading from the N-terminus, the 269-residue chain is 5'-nucleotidase SurE (269 aa).

A divalent metal cation contacts are provided by Asp-11, Asp-12, Ser-43, and Asn-101.

Belongs to the SurE nucleotidase family. Requires a divalent metal cation as cofactor.

Its subcellular location is the cytoplasm. The catalysed reaction is a ribonucleoside 5'-phosphate + H2O = a ribonucleoside + phosphate. Its function is as follows. Nucleotidase that shows phosphatase activity on nucleoside 5'-monophosphates. The sequence is that of 5'-nucleotidase SurE from Prochlorococcus marinus (strain AS9601).